Here is a 68-residue protein sequence, read N- to C-terminus: Intracellular calcium channel modulator CCP-Ts (68 aa).

Positions 1 to 23 (MNPKLLIVIGLLLATGVCSFAKA) are cleaved as a signal peptide. 3 disulfide bridges follow: C33–C47, C40–C53, and C46–C62.

The protein belongs to the scorpion calcin-like family. In terms of tissue distribution, expressed by the venom gland. In intravenously injected mice, the labeled toxin has preference for heart, liver and lungs.

It is found in the secreted. It localises to the nucleus. In terms of biological role, cell penetrating peptide (CPP) that increases intracellular calcium release through the activation of nuclear inositol 1,4,5-trisphosphate receptors (ITPR) of cardiomyocytes, thereby causing an increase in the contraction frequency of these cells. In vivo, this toxin is not lethal to mice, hovewer anti-CPP serum reduces venom lethality, suggesting that this toxin is lethal when it acts in synergy with other venom components. The chain is Intracellular calcium channel modulator CCP-Ts from Tityus serrulatus (Brazilian scorpion).